A 174-amino-acid polypeptide reads, in one-letter code: Chromophore lyase CpcS/CpeS 1 (174 aa).

Belongs to the CpcS/CpeS biliprotein lyase family.

In terms of biological role, covalently attaches a chromophore to Cys residue(s) of phycobiliproteins. This chain is Chromophore lyase CpcS/CpeS 1, found in Trichodesmium erythraeum (strain IMS101).